Here is a 94-residue protein sequence, read N- to C-terminus: MNLSMLHDNVLIEALEEGNSNSPIQLPDSAKKKPTKGKVVAVGPGVYNSNGNILPMNIKVGEVVFYRQWAGNEIEFNDKKYIVMKESDIIAKEA.

It belongs to the GroES chaperonin family. As to quaternary structure, heptamer of 7 subunits arranged in a ring. Interacts with the chaperonin GroEL.

It localises to the cytoplasm. Its function is as follows. Together with the chaperonin GroEL, plays an essential role in assisting protein folding. The GroEL-GroES system forms a nano-cage that allows encapsulation of the non-native substrate proteins and provides a physical environment optimized to promote and accelerate protein folding. GroES binds to the apical surface of the GroEL ring, thereby capping the opening of the GroEL channel. The protein is Co-chaperonin GroES of Ehrlichia canis (strain Jake).